A 429-amino-acid chain; its full sequence is Enolase (429 aa).

Glutamine 163 serves as a coordination point for (2R)-2-phosphoglycerate. Residue glutamate 205 is the Proton donor of the active site. The Mg(2+) site is built by aspartate 242, glutamate 285, and aspartate 312. Residues lysine 337, arginine 366, serine 367, and lysine 388 each contribute to the (2R)-2-phosphoglycerate site. Lysine 337 acts as the Proton acceptor in catalysis.

It belongs to the enolase family. It depends on Mg(2+) as a cofactor.

It is found in the cytoplasm. The protein localises to the secreted. Its subcellular location is the cell surface. It catalyses the reaction (2R)-2-phosphoglycerate = phosphoenolpyruvate + H2O. Its pathway is carbohydrate degradation; glycolysis; pyruvate from D-glyceraldehyde 3-phosphate: step 4/5. Catalyzes the reversible conversion of 2-phosphoglycerate (2-PG) into phosphoenolpyruvate (PEP). It is essential for the degradation of carbohydrates via glycolysis. This is Enolase from Methylorubrum populi (strain ATCC BAA-705 / NCIMB 13946 / BJ001) (Methylobacterium populi).